The chain runs to 46 residues: Myoregulin (46 aa).

At 1–21 (MTGKNWILISTTTPKSLEDEI) the chain is on the cytoplasmic side. Residues 22–42 (VGRLLKILFVIFVDLISIIYV) traverse the membrane as a helical segment. The Lumenal portion of the chain corresponds to 43 to 46 (VITS).

Homooligomer. Monomer. Interacts with ATP2A1/SERCA1. Interacts as a monomer with ATP2A2/SERCA2; the interaction inhibits ATP2A2 activity.

The protein resides in the sarcoplasmic reticulum membrane. Functionally, inhibits the activity of ATP2A1/SERCA1 ATPase in sarcoplasmic reticulum by decreasing the apparent affinity of the ATPase for Ca(2+), thereby acting as a key regulator of skeletal muscle activity. Its high expression in adult skeletal muscle, suggests that it constitutes the predominant regulator of ATP2A1/SERCA1 in adult skeletal muscle. Also inhibits the activity of ATP2A2/SERCA2 and ATP2A3/SERCA3. This Homo sapiens (Human) protein is Myoregulin.